A 174-amino-acid chain; its full sequence is MRITVLRLGHRPERDKRITTHVGLVARAFGADEILIEGRDESVVESLRDVVNRWGGSFSVTDGIAWRDELRRFRDSGGKIVHLTMYGRRIDEVIGEIRSCERIMVVVGAEKVPPDVYDIADWNVAVGNQPHSEVAALAVFLDRLFMGEELEKDFGGRLKVIPAARGKVVLDRGL.

Residues Leu83, 108 to 112 (GAEKV), and 126 to 133 (VGNQPHSE) contribute to the S-adenosyl-L-methionine site.

This sequence belongs to the aTrm56 family. In terms of assembly, homodimer.

Its subcellular location is the cytoplasm. It carries out the reaction cytidine(56) in tRNA + S-adenosyl-L-methionine = 2'-O-methylcytidine(56) in tRNA + S-adenosyl-L-homocysteine + H(+). Specifically catalyzes the AdoMet-dependent 2'-O-ribose methylation of cytidine at position 56 in tRNAs. The sequence is that of tRNA (cytidine(56)-2'-O)-methyltransferase from Methanothrix thermoacetophila (strain DSM 6194 / JCM 14653 / NBRC 101360 / PT) (Methanosaeta thermophila).